Here is a 132-residue protein sequence, read N- to C-terminus: Small ribosomal subunit protein uS8 (132 aa).

This sequence belongs to the universal ribosomal protein uS8 family. As to quaternary structure, part of the 30S ribosomal subunit. Contacts proteins S5 and S12.

One of the primary rRNA binding proteins, it binds directly to 16S rRNA central domain where it helps coordinate assembly of the platform of the 30S subunit. The protein is Small ribosomal subunit protein uS8 of Streptococcus mutans serotype c (strain ATCC 700610 / UA159).